The primary structure comprises 231 residues: Ion-translocating oxidoreductase complex subunit E (231 aa).

Transmembrane regions (helical) follow at residues A18–A38, L39–L59, T63–V83, L86–V106, A125–L145, and P182–G202.

This sequence belongs to the NqrDE/RnfAE family. The complex is composed of six subunits: RsxA, RsxB, RsxC, RsxD, RsxE and RsxG.

The protein localises to the cell inner membrane. Part of a membrane-bound complex that couples electron transfer with translocation of ions across the membrane. Required to maintain the reduced state of SoxR. The protein is Ion-translocating oxidoreductase complex subunit E of Shigella flexneri serotype 5b (strain 8401).